The sequence spans 469 residues: UDP-N-acetylmuramate--L-alanine ligase (469 aa).

118–124 (GTHGKTT) contributes to the ATP binding site.

Belongs to the MurCDEF family.

The protein localises to the cytoplasm. The catalysed reaction is UDP-N-acetyl-alpha-D-muramate + L-alanine + ATP = UDP-N-acetyl-alpha-D-muramoyl-L-alanine + ADP + phosphate + H(+). The protein operates within cell wall biogenesis; peptidoglycan biosynthesis. Cell wall formation. This Lachnoclostridium phytofermentans (strain ATCC 700394 / DSM 18823 / ISDg) (Clostridium phytofermentans) protein is UDP-N-acetylmuramate--L-alanine ligase.